A 715-amino-acid polypeptide reads, in one-letter code: Beta-galactosidase 9 (715 aa).

The signal sequence occupies residues 1–20 (MSGGAVAFLLLVAAAAVANA). The active-site Proton donor is the Glu178. Glu247 serves as the catalytic Nucleophile.

Belongs to the glycosyl hydrolase 35 family.

The protein resides in the secreted. The protein localises to the extracellular space. It localises to the apoplast. It catalyses the reaction Hydrolysis of terminal non-reducing beta-D-galactose residues in beta-D-galactosides.. This is Beta-galactosidase 9 from Oryza sativa subsp. japonica (Rice).